A 152-amino-acid polypeptide reads, in one-letter code: MPSVRSLLRLLAAAAACGAFAFLGYCIYLNRKRRGDPAFKRRLRDKRRAEPQKAEEQGTQLWDPTKNKKLQELFLQEVRMGELWLSRGEHRMGIQHLGNALLVCEQPRELLKVFKHTLPPKVFEMLLHKIPLICQQFEADMNEQDCLEDDPD.

At 1–9 (MPSVRSLLR) the chain is on the mitochondrial intermembrane side. Residues 10–29 (LLAAAAACGAFAFLGYCIYL) traverse the membrane as a helical segment. Topologically, residues 30-152 (NRKRRGDPAF…EQDCLEDDPD (123 aa)) are cytoplasmic. Residues 43-62 (LRDKRRAEPQKAEEQGTQLW) form a disordered region. Over residues 47–56 (RRAEPQKAEE) the composition is skewed to basic and acidic residues.

The protein belongs to the Tom20 family.

It localises to the mitochondrion outer membrane. This Homo sapiens (Human) protein is TOMM20-like protein 1 (TOMM20L).